The primary structure comprises 191 residues: Fe/S biogenesis protein NfuA (191 aa).

The [4Fe-4S] cluster site is built by Cys-149 and Cys-152.

The protein belongs to the NfuA family. As to quaternary structure, homodimer. It depends on [4Fe-4S] cluster as a cofactor.

Involved in iron-sulfur cluster biogenesis. Binds a 4Fe-4S cluster, can transfer this cluster to apoproteins, and thereby intervenes in the maturation of Fe/S proteins. Could also act as a scaffold/chaperone for damaged Fe/S proteins. This chain is Fe/S biogenesis protein NfuA, found in Salmonella arizonae (strain ATCC BAA-731 / CDC346-86 / RSK2980).